A 156-amino-acid polypeptide reads, in one-letter code: Snaclec stejaggregin-B subunit alpha (156 aa).

The N-terminal stretch at 1–23 (MGRFISVSFGLLVVFLSLSGTGA) is a signal peptide. 3 cysteine pairs are disulfide-bonded: C25–C36, C53–C150, and C125–C142. The region spanning 32-151 (FKQYCYQIIK…CEQKHLFMCK (120 aa)) is the C-type lectin domain.

It belongs to the snaclec family. In terms of assembly, heteromultimer; disulfide-linked. In terms of tissue distribution, expressed by the venom gland.

The protein resides in the secreted. Its function is as follows. Interferes with one step of hemostasis (modulation of platelet aggregation, or coagulation cascade, for example). The polypeptide is Snaclec stejaggregin-B subunit alpha (Trimeresurus stejnegeri (Chinese green tree viper)).